The following is a 217-amino-acid chain: E3 ubiquitin-protein ligase znrf2 (217 aa).

Disordered regions lie at residues 1–27 (MGAK…SATA) and 63–111 (QFIS…ERST). A lipid anchor (N-myristoyl glycine) is attached at glycine 2. The span at 68–100 (RTRSVGPSARPQSGINIPNSGAYSSADSGNSTP) shows a compositional bias: polar residues. An RING-type; atypical zinc finger spans residues 174-215 (CAICLEELLQGDTIARLPCLCIYHKGCIDEWFEVNRSCPEHP).

It localises to the endosome membrane. The protein localises to the lysosome membrane. It is found in the presynaptic cell membrane. It carries out the reaction S-ubiquitinyl-[E2 ubiquitin-conjugating enzyme]-L-cysteine + [acceptor protein]-L-lysine = [E2 ubiquitin-conjugating enzyme]-L-cysteine + N(6)-ubiquitinyl-[acceptor protein]-L-lysine.. It participates in protein modification; protein ubiquitination. Its function is as follows. May play a role in the establishment and maintenance of neuronal transmission and plasticity via its ubiquitin ligase activity. E3 ubiquitin ligases accept ubiquitin from an E2 ubiquitin-conjugating enzyme in the form of a thioester and then directly transfer the ubiquitin to targeted substrates. This chain is E3 ubiquitin-protein ligase znrf2 (znrf2), found in Danio rerio (Zebrafish).